A 206-amino-acid polypeptide reads, in one-letter code: Small ribosomal subunit protein uS4 (206 aa).

An S4 RNA-binding domain is found at 96–156 (GRLDNVVYRM…EKAKKQSRVK (61 aa)).

It belongs to the universal ribosomal protein uS4 family. As to quaternary structure, part of the 30S ribosomal subunit. Contacts protein S5. The interaction surface between S4 and S5 is involved in control of translational fidelity.

One of the primary rRNA binding proteins, it binds directly to 16S rRNA where it nucleates assembly of the body of the 30S subunit. Functionally, with S5 and S12 plays an important role in translational accuracy. This is Small ribosomal subunit protein uS4 from Salmonella typhi.